Consider the following 339-residue polypeptide: D-erythrose-4-phosphate dehydrogenase (339 aa).

12-13 (RI) serves as a coordination point for NAD(+). Substrate-binding positions include 154–156 (SCT), Arg200, 213–214 (TK), and Arg236. Residue Cys155 is the Nucleophile of the active site. Residue Asn318 coordinates NAD(+).

The protein belongs to the glyceraldehyde-3-phosphate dehydrogenase family. Epd subfamily. Homotetramer.

It localises to the cytoplasm. It carries out the reaction D-erythrose 4-phosphate + NAD(+) + H2O = 4-phospho-D-erythronate + NADH + 2 H(+). Its pathway is cofactor biosynthesis; pyridoxine 5'-phosphate biosynthesis; pyridoxine 5'-phosphate from D-erythrose 4-phosphate: step 1/5. Functionally, catalyzes the NAD-dependent conversion of D-erythrose 4-phosphate to 4-phosphoerythronate. In Proteus mirabilis (strain HI4320), this protein is D-erythrose-4-phosphate dehydrogenase.